The sequence spans 183 residues: GTP cyclohydrolase 1 (183 aa).

Zn(2+)-binding residues include Cys-71, His-74, and Cys-142.

This sequence belongs to the GTP cyclohydrolase I family. Homomer.

The enzyme catalyses GTP + H2O = 7,8-dihydroneopterin 3'-triphosphate + formate + H(+). It functions in the pathway cofactor biosynthesis; 7,8-dihydroneopterin triphosphate biosynthesis; 7,8-dihydroneopterin triphosphate from GTP: step 1/1. The polypeptide is GTP cyclohydrolase 1 (Leptospira biflexa serovar Patoc (strain Patoc 1 / Ames)).